The sequence spans 580 residues: NADH-ubiquinone oxidoreductase chain 5 (580 aa).

The next 16 helical transmembrane spans lie at 12–32, 50–70, 92–112, 113–133, 153–173, 176–196, 218–240, 249–269, 274–294, 300–320, 343–363, 378–400, 427–447, 464–484, 500–520, and 560–580; these read FYILIFISFTLFILSLKFLLM, IVMTFLFDWMSLMFMSFVLLI, ILLVLMFVMSMMMLIISPNLI, SILLGWDGLGLVSYCLVIYFQ, VALLLAIAWMLNYGSWNYIFY, MMKNNFEMMVIGGLVMLAAMT, SALVHSSTLVTAGVYLLIRFNIL, FLLLVSGLTMFMAGLGANFEF, IIALSTLSQLGLMMSILSIGY, FHLLTHALFKALLFMCAGVII, CSCFNIANLALCGMPFLAGFY, NFFSFFLFFFSTGLTVCYSFRLV, IFFLMVMAIIGGSMLSWLMFF, MVCLLGGFTGYLISNVNFFFI, MWFMPLISTVGVVKWPLILGM, and IYLLSYMLWVIILVSMMLFLN.

It belongs to the complex I subunit 5 family.

The protein localises to the mitochondrion inner membrane. It carries out the reaction a ubiquinone + NADH + 5 H(+)(in) = a ubiquinol + NAD(+) + 4 H(+)(out). Functionally, core subunit of the mitochondrial membrane respiratory chain NADH dehydrogenase (Complex I) that is believed to belong to the minimal assembly required for catalysis. Complex I functions in the transfer of electrons from NADH to the respiratory chain. The immediate electron acceptor for the enzyme is believed to be ubiquinone. This is NADH-ubiquinone oxidoreductase chain 5 from Aedes aegypti (Yellowfever mosquito).